The chain runs to 185 residues: Protein GrpE (185 aa).

The disordered stretch occupies residues 1–44 (MSEEELTNGPGPEPQPEPLEVESAPLEAAPAGEPDKALLEAQQQ).

Belongs to the GrpE family. Homodimer.

The protein resides in the cytoplasm. In terms of biological role, participates actively in the response to hyperosmotic and heat shock by preventing the aggregation of stress-denatured proteins, in association with DnaK and GrpE. It is the nucleotide exchange factor for DnaK and may function as a thermosensor. Unfolded proteins bind initially to DnaJ; upon interaction with the DnaJ-bound protein, DnaK hydrolyzes its bound ATP, resulting in the formation of a stable complex. GrpE releases ADP from DnaK; ATP binding to DnaK triggers the release of the substrate protein, thus completing the reaction cycle. Several rounds of ATP-dependent interactions between DnaJ, DnaK and GrpE are required for fully efficient folding. This chain is Protein GrpE, found in Methylococcus capsulatus (strain ATCC 33009 / NCIMB 11132 / Bath).